The sequence spans 730 residues: Phosphoribosylformylglycinamidine synthase subunit PurL (730 aa).

Residue histidine 44 is part of the active site. ATP contacts are provided by tyrosine 47 and lysine 86. Glutamate 88 contributes to the Mg(2+) binding site. Substrate contacts are provided by residues serine 89–histidine 92 and arginine 111. The Proton acceptor role is filled by histidine 90. Position 112 (aspartate 112) interacts with Mg(2+). Glutamine 235 is a substrate binding site. Position 263 (aspartate 263) interacts with Mg(2+). Glutamate 307–glutamine 309 contacts substrate. The ATP site is built by asparagine 489 and glycine 526. Asparagine 527 is a Mg(2+) binding site. Position 529 (serine 529) interacts with substrate.

This sequence belongs to the FGAMS family. Monomer. Part of the FGAM synthase complex composed of 1 PurL, 1 PurQ and 2 PurS subunits.

It is found in the cytoplasm. It carries out the reaction N(2)-formyl-N(1)-(5-phospho-beta-D-ribosyl)glycinamide + L-glutamine + ATP + H2O = 2-formamido-N(1)-(5-O-phospho-beta-D-ribosyl)acetamidine + L-glutamate + ADP + phosphate + H(+). It participates in purine metabolism; IMP biosynthesis via de novo pathway; 5-amino-1-(5-phospho-D-ribosyl)imidazole from N(2)-formyl-N(1)-(5-phospho-D-ribosyl)glycinamide: step 1/2. Part of the phosphoribosylformylglycinamidine synthase complex involved in the purines biosynthetic pathway. Catalyzes the ATP-dependent conversion of formylglycinamide ribonucleotide (FGAR) and glutamine to yield formylglycinamidine ribonucleotide (FGAM) and glutamate. The FGAM synthase complex is composed of three subunits. PurQ produces an ammonia molecule by converting glutamine to glutamate. PurL transfers the ammonia molecule to FGAR to form FGAM in an ATP-dependent manner. PurS interacts with PurQ and PurL and is thought to assist in the transfer of the ammonia molecule from PurQ to PurL. This is Phosphoribosylformylglycinamidine synthase subunit PurL from Pelagibacter ubique (strain HTCC1062).